The primary structure comprises 389 residues: Methylthioribose-1-phosphate isomerase (389 aa).

Aspartate 258 serves as the catalytic Proton donor.

It belongs to the eIF-2B alpha/beta/delta subunits family. MtnA subfamily.

The protein resides in the cytoplasm. It is found in the nucleus. The catalysed reaction is 5-(methylsulfanyl)-alpha-D-ribose 1-phosphate = 5-(methylsulfanyl)-D-ribulose 1-phosphate. The protein operates within amino-acid biosynthesis; L-methionine biosynthesis via salvage pathway; L-methionine from S-methyl-5-thio-alpha-D-ribose 1-phosphate: step 1/6. Functionally, catalyzes the interconversion of methylthioribose-1-phosphate (MTR-1-P) into methylthioribulose-1-phosphate (MTRu-1-P). In Chaetomium globosum (strain ATCC 6205 / CBS 148.51 / DSM 1962 / NBRC 6347 / NRRL 1970) (Soil fungus), this protein is Methylthioribose-1-phosphate isomerase.